We begin with the raw amino-acid sequence, 685 residues long: Invasion protein InvA (685 aa).

The next 8 helical transmembrane spans lie at 17 to 37, 39 to 59, 61 to 81, 110 to 130, 197 to 217, 235 to 255, 274 to 294, and 295 to 315; these read ILVLMVMIISMFVIPLPTYLV, FLIALNIVLAILVFMGSFYID, ILSFSTFPAVLLITTLFRLAL, SLAVGFVVFSIVTVVQFIVIT, AIAGIIIIFVNFIGGISVGMT, IGDGLVAQIPALLIAISAGFI, LLNNPFVLVVTAILTISMGTL, and PGFPLPVFVILSVVLSVLFYF.

This sequence belongs to the FHIPEP (flagella/HR/invasion proteins export pore) family.

It is found in the cell inner membrane. Its function is as follows. Involved in the invasion of the cells of the intestinal epithelium. Could be involved in the translocation of the InvE protein. In Salmonella typhi, this protein is Invasion protein InvA (invA).